The chain runs to 514 residues: ATP synthase subunit alpha (514 aa).

170–177 contributes to the ATP binding site; that stretch reads GDRQIGKT.

It belongs to the ATPase alpha/beta chains family. As to quaternary structure, F-type ATPases have 2 components, CF(1) - the catalytic core - and CF(0) - the membrane proton channel. CF(1) has five subunits: alpha(3), beta(3), gamma(1), delta(1), epsilon(1). CF(0) has three main subunits: a(1), b(2) and c(9-12). The alpha and beta chains form an alternating ring which encloses part of the gamma chain. CF(1) is attached to CF(0) by a central stalk formed by the gamma and epsilon chains, while a peripheral stalk is formed by the delta and b chains.

The protein resides in the cell inner membrane. The enzyme catalyses ATP + H2O + 4 H(+)(in) = ADP + phosphate + 5 H(+)(out). Produces ATP from ADP in the presence of a proton gradient across the membrane. The alpha chain is a regulatory subunit. The chain is ATP synthase subunit alpha from Pseudomonas entomophila (strain L48).